Reading from the N-terminus, the 506-residue chain is Protein nucleotidyltransferase YdiU (506 aa).

8 residues coordinate ATP: Gly-95, Gly-97, Arg-98, Lys-118, Asp-130, Gly-131, Arg-181, and Arg-188. The active-site Proton acceptor is Asp-257. Residues Asn-258 and Asp-267 each contribute to the Mg(2+) site. Position 267 (Asp-267) interacts with ATP. The tract at residues 487–506 (KHYQDAPTPDQRVKQTFCGT) is disordered.

It belongs to the SELO family. Requires Mg(2+) as cofactor. It depends on Mn(2+) as a cofactor.

The catalysed reaction is L-seryl-[protein] + ATP = 3-O-(5'-adenylyl)-L-seryl-[protein] + diphosphate. It carries out the reaction L-threonyl-[protein] + ATP = 3-O-(5'-adenylyl)-L-threonyl-[protein] + diphosphate. It catalyses the reaction L-tyrosyl-[protein] + ATP = O-(5'-adenylyl)-L-tyrosyl-[protein] + diphosphate. The enzyme catalyses L-histidyl-[protein] + UTP = N(tele)-(5'-uridylyl)-L-histidyl-[protein] + diphosphate. The catalysed reaction is L-seryl-[protein] + UTP = O-(5'-uridylyl)-L-seryl-[protein] + diphosphate. It carries out the reaction L-tyrosyl-[protein] + UTP = O-(5'-uridylyl)-L-tyrosyl-[protein] + diphosphate. Functionally, nucleotidyltransferase involved in the post-translational modification of proteins. It can catalyze the addition of adenosine monophosphate (AMP) or uridine monophosphate (UMP) to a protein, resulting in modifications known as AMPylation and UMPylation. The chain is Protein nucleotidyltransferase YdiU from Shewanella denitrificans (strain OS217 / ATCC BAA-1090 / DSM 15013).